Here is a 347-residue protein sequence, read N- to C-terminus: GMP reductase (347 aa).

108-131 (ADFEKTKQILDLNPALNFVCIDVA) contributes to the NADP(+) binding site. K(+) contacts are provided by glycine 181 and glycine 183. Cysteine 186 (thioimidate intermediate) is an active-site residue. 216–239 (IVSDGGCTTPGDVAKAFGGGADFV) serves as a coordination point for NADP(+).

It belongs to the IMPDH/GMPR family. GuaC type 1 subfamily. Homotetramer.

The catalysed reaction is IMP + NH4(+) + NADP(+) = GMP + NADPH + 2 H(+). Catalyzes the irreversible NADPH-dependent deamination of GMP to IMP. It functions in the conversion of nucleobase, nucleoside and nucleotide derivatives of G to A nucleotides, and in maintaining the intracellular balance of A and G nucleotides. The protein is GMP reductase of Shigella boydii serotype 4 (strain Sb227).